A 325-amino-acid polypeptide reads, in one-letter code: D-alanine--D-alanine ligase (325 aa).

The region spanning 102–300 is the ATP-grasp domain; it reads KQIFRAAGIP…FTELVERMLQ (199 aa). ATP is bound at residue 130–185; it reads AAELGSPLVIKPSNNGSTVGISIVRDERSFAQGLELARSVSSRIFLERYVPGKEIT. Residues Asp254, Glu267, and Asn269 each coordinate Mg(2+).

This sequence belongs to the D-alanine--D-alanine ligase family. Mg(2+) serves as cofactor. The cofactor is Mn(2+).

The protein resides in the cytoplasm. The enzyme catalyses 2 D-alanine + ATP = D-alanyl-D-alanine + ADP + phosphate + H(+). The protein operates within cell wall biogenesis; peptidoglycan biosynthesis. Functionally, cell wall formation. In Synechococcus sp. (strain JA-2-3B'a(2-13)) (Cyanobacteria bacterium Yellowstone B-Prime), this protein is D-alanine--D-alanine ligase.